The primary structure comprises 78 residues: Large ribosomal subunit protein bL28 (78 aa).

Residues 1–23 (MSRKCQITGKKANNAMAVSHSHR) are disordered.

This sequence belongs to the bacterial ribosomal protein bL28 family.

The sequence is that of Large ribosomal subunit protein bL28 from Picosynechococcus sp. (strain ATCC 27264 / PCC 7002 / PR-6) (Agmenellum quadruplicatum).